The sequence spans 1439 residues: Fanconi anemia group A protein homolog (1439 aa).

The disordered stretch occupies residues 1–20; the sequence is MPGSPARGAAMGGGPRGLRK. The Nuclear localization signal motif lies at 19–35; sequence RKTWTELLAGRVKKQKY.

In terms of assembly, belongs to the multisubunit FA complex composed of FANCA, FANCB, FANCC, FANCE, FANCF, FANCG, FANCL/PHF9 and FANCM. In complex with FANCF, FANCG and FANCL, but not with FANCC, nor FANCE, interacts with HES1; this interaction may be essential for the stability and nuclear localization of FA core complex proteins. The complex with FANCC and FANCG may also include EIF2AK2 and HSP70. Interacts with FAAP20; interaction is direct. Post-translationally, phosphorylated primarily on serine residues. Phosphorylation is required for the formation of the nuclear complex. Mainly expressed in testis and lymphoid tissues like thymus, lymph nodes, and spleen, and at lower levels in kidney and ovary.

It localises to the nucleus. The protein localises to the cytoplasm. In terms of biological role, DNA repair protein that may operate in a postreplication repair or a cell cycle checkpoint function. May be involved in interstrand DNA cross-link repair and in the maintenance of normal chromosome stability. This is Fanconi anemia group A protein homolog (Fanca) from Mus musculus (Mouse).